The primary structure comprises 120 residues: MNDFISSLNNWQALYALSNTMLSLANSGQWDELIEQEVKYVTLVEAIARNPIEPDNSVFQEKARELLTKVLANEAALKIKLQARMEELRVLIEQNGNQKSLVSAYGKLSGNVLMPNDFNQ.

The tract at residues 1 to 50 is required for homodimerization; sequence MNDFISSLNNWQALYALSNTMLSLANSGQWDELIEQEVKYVTLVEAIARN. The tract at residues 59–97 is fliD binding; it reads FQEKARELLTKVLANEAALKIKLQARMEELRVLIEQNGN.

It belongs to the FliT family. As to quaternary structure, homodimer. Interacts with FliD and FlhC.

The protein resides in the cytoplasm. It localises to the cytosol. Dual-function protein that regulates the transcription of class 2 flagellar operons and that also acts as an export chaperone for the filament-capping protein FliD. As a transcriptional regulator, acts as an anti-FlhDC factor; it directly binds FlhC, thus inhibiting the binding of the FlhC/FlhD complex to class 2 promoters, resulting in decreased expression of class 2 flagellar operons. As a chaperone, effects FliD transition to the membrane by preventing its premature polymerization, and by directing it to the export apparatus. This Cronobacter sakazakii (strain ATCC BAA-894) (Enterobacter sakazakii) protein is Flagellar protein FliT.